Consider the following 275-residue polypeptide: 2,3,4,5-tetrahydropyridine-2,6-dicarboxylate N-succinyltransferase (275 aa).

Substrate contacts are provided by R104 and D141.

This sequence belongs to the transferase hexapeptide repeat family. In terms of assembly, homotrimer.

It localises to the cytoplasm. It catalyses the reaction (S)-2,3,4,5-tetrahydrodipicolinate + succinyl-CoA + H2O = (S)-2-succinylamino-6-oxoheptanedioate + CoA. It functions in the pathway amino-acid biosynthesis; L-lysine biosynthesis via DAP pathway; LL-2,6-diaminopimelate from (S)-tetrahydrodipicolinate (succinylase route): step 1/3. In Actinobacillus succinogenes (strain ATCC 55618 / DSM 22257 / CCUG 43843 / 130Z), this protein is 2,3,4,5-tetrahydropyridine-2,6-dicarboxylate N-succinyltransferase.